The chain runs to 1778 residues: Ankyrin repeat domain-containing protein 36C (1778 aa).

ANK repeat units lie at residues 64–93 (KERT…ELNL), 97–126 (EDRT…DPNI), 130–159 (FGRT…NIEE), 163–192 (DEYP…NINA), and 196–225 (LGRS…DVFS). 5 disordered regions span residues 260 to 365 (LSIN…DEQK), 501 to 526 (ALPA…VKDS), 538 to 653 (DSLT…QKQS), 671 to 1027 (RITG…QKQL), and 1051 to 1072 (IRGT…EKDS). Composition is skewed to polar residues over residues 261 to 272 (SINSNPVSSQKQ) and 297 to 306 (KSGTVSSQKQ). The segment covering 539–555 (SLTSSEESSERPPLSTL) has biased composition (low complexity). Composition is skewed to basic and acidic residues over residues 585-596 (PAEKATSDDKDS) and 619-630 (PAEKATSDEKDS). 2 stretches are compositionally biased toward polar residues: residues 631 to 653 (VSNI…QKQS) and 679 to 691 (GTVS…PSKA). Positions 794–813 (TSDEKDSFSNITREKKDGEI) are enriched in basic and acidic residues. S829 carries the post-translational modification Phosphoserine. 2 stretches are compositionally biased toward basic and acidic residues: residues 840–849 (RGKEDGEKTR) and 862–881 (TSDE…DGET). A Phosphoserine modification is found at S897. The span at 907–917 (AREKKDGEKSR) shows a compositional bias: basic and acidic residues. The span at 942–955 (RGKKHGEKTRRVSS) shows a compositional bias: basic residues. Composition is skewed to polar residues over residues 983-992 (ISGTVSSQKQ) and 1005-1026 (VSNI…SQKQ). Coiled coils occupy residues 1157–1187 (EQDL…QIHS), 1247–1333 (ELKD…YRIE), 1362–1480 (SETD…DHDQ), and 1544–1768 (VFEH…ILQH).

It belongs to the ANKRD36 family.

In Homo sapiens (Human), this protein is Ankyrin repeat domain-containing protein 36C (ANKRD36C).